The primary structure comprises 429 residues: Bifunctional phosphoribosylaminoimidazole carboxylase/phosphoribosylaminoimidazole succinocarboxamide synthetase (429 aa).

Positions 7–264 (ASIEGYKLGK…WVAEQLADIV (258 aa)) are SAICAR synthetase. Positions 7-264 (ASIEGYKLGK…WVAEQLADIV (258 aa)) are SAICAR synthetase domain. Residues 265 to 429 (PKKDHLVVIL…DKELRGVRNA (165 aa)) are AIR carboxylase. The segment at 270–429 (LVVILMGSAS…DKELRGVRNA (160 aa)) is AIR carboxylase domain. A CO2-binding site is contributed by Ser335.

The protein in the N-terminal section; belongs to the SAICAR synthetase family. In the C-terminal section; belongs to the AIR carboxylase family. Class II subfamily. As to quaternary structure, homooctamer.

The enzyme catalyses 5-amino-1-(5-phospho-D-ribosyl)imidazole-4-carboxylate + L-aspartate + ATP = (2S)-2-[5-amino-1-(5-phospho-beta-D-ribosyl)imidazole-4-carboxamido]succinate + ADP + phosphate + 2 H(+). It catalyses the reaction 5-amino-1-(5-phospho-D-ribosyl)imidazole-4-carboxylate + H(+) = 5-amino-1-(5-phospho-beta-D-ribosyl)imidazole + CO2. It functions in the pathway purine metabolism; IMP biosynthesis via de novo pathway; 5-amino-1-(5-phospho-D-ribosyl)imidazole-4-carboxamide from 5-amino-1-(5-phospho-D-ribosyl)imidazole-4-carboxylate: step 1/2. The protein operates within purine metabolism; IMP biosynthesis via de novo pathway; 5-amino-1-(5-phospho-D-ribosyl)imidazole-4-carboxylate from 5-amino-1-(5-phospho-D-ribosyl)imidazole (carboxylase route): step 1/1. Bifunctional phosphoribosylaminoimidazole carboxylase and phosphoribosylaminoimidazole succinocarboxamide synthetase catalyzing two reactions of the de novo purine biosynthetic pathway. The polypeptide is Bifunctional phosphoribosylaminoimidazole carboxylase/phosphoribosylaminoimidazole succinocarboxamide synthetase (Drosophila melanogaster (Fruit fly)).